A 488-amino-acid chain; its full sequence is Cytochrome P450 71A24 (488 aa).

Residues 3-23 (MMMMIILLLCSIILITILFFK) traverse the membrane as a helical segment. Cysteine 433 lines the heme pocket.

The protein belongs to the cytochrome P450 family. Heme is required as a cofactor.

It localises to the membrane. The polypeptide is Cytochrome P450 71A24 (CYP71A24) (Arabidopsis thaliana (Mouse-ear cress)).